The sequence spans 830 residues: Heavy metal tolerance protein (830 aa).

Residues 1 to 27 (MVLRYNSPRLNILELVLLYVGFFSIGS) form the signal peptide. Transmembrane regions (helical) follow at residues 51 to 71 (PIGI…VDIS), 88 to 108 (TTVV…ISCA), and 126 to 146 (LSVL…IVYS). N-linked (GlcNAc...) asparagine glycosylation is present at Asn-150. The next 3 membrane-spanning stretches (helical) occupy residues 156–176 (IVLA…AIYL), 263–283 (FQIF…ILAP), and 304–324 (DVIL…IGSL). Residues 265–550 (IFICIVLLFL…FGTLYRSLQN (286 aa)) enclose the ABC transmembrane type-1 domain. Asn-350 carries an N-linked (GlcNAc...) asparagine glycan. 2 consecutive transmembrane segments (helical) span residues 381–401 (VVFQ…YFFI) and 403–423 (FDIY…YVTV). Residues 429–433 (RTEAR), 492–495 (NIVQ), and Gly-542 each bind glutathione. Residues 490–511 (FLNIVQGGIFTFSLAIACLLSA) form a helical membrane-spanning segment. The 235-residue stretch at 584–818 (VIFSHVSFAY…DGGAYKKMWF (235 aa)) folds into the ABC transporter domain. ATP is bound by residues Tyr-593 and 617-628 (GESGGGKSTIMR).

Belongs to the ABC transporter superfamily. ABCB family. Heavy Metal importer (TC 3.A.1.210) subfamily.

The protein localises to the vacuole membrane. Involved in metal tolerance. Probably involved in the transport of metal-bound phytochelatins. Compartmentalizes cadmium within vacuoles, thereby protecting cells from cadmium toxicity. The chain is Heavy metal tolerance protein (hmt1) from Schizosaccharomyces pombe (strain 972 / ATCC 24843) (Fission yeast).